The following is a 1004-amino-acid chain: Receptor-type tyrosine-protein phosphatase N2 (1004 aa).

Positions 1–27 (MGLPLPLLLLLLLPPPLPRALPAPASA) are cleaved as a signal peptide. The interval 1–409 (MGLPLPLLLL…PEAPLLEKSS (409 aa)) is involved in localization to secretory granules; interaction with CPE. Topologically, residues 28 to 603 (RGRQLPGRLG…HPEEQEDSTK (576 aa)) are extracellular. Omega-N-methylarginine is present on Arg259. 3 disordered regions span residues 274 to 294 (APAL…SLSM), 333 to 360 (QSDP…DAPE), and 393 to 459 (DHGS…WRLE). Ser340 carries the post-translational modification Phosphoserine. Composition is skewed to basic and acidic residues over residues 341–356 (QESH…REQA) and 407–418 (KSSRAEMKKSEQ). A compositionally biased stretch (acidic residues) spans 419-430 (PEEVLSSEEETA). Ser424 and Ser425 each carry phosphoserine. Basic and acidic residues predominate over residues 431-450 (GVEHVKSRTYSKDLLERKPN). Asn553 carries N-linked (GlcNAc...) asparagine glycosylation. The helical transmembrane segment at 604 to 624 (FIVLTFLSIACILAVLLASSL) threads the bilayer. The Cytoplasmic segment spans residues 625 to 1004 (AYCLRHNSHY…VNAILKALPQ (380 aa)). Positions 655 to 664 (YQELCRQRMA) match the Tyrosine-based internalization motif motif. The segment at 665-710 (VRPQDHSEGPHTSRINSVSSQLSDGPMPSPSARSSTSSWSEEPAQS) is disordered. Positions 677–687 (SRINSVSSQLS) are enriched in polar residues. Ser681 carries the post-translational modification Phosphoserine; by PKA. Ser687 is modified (phosphoserine). Residues 694–710 (PSARSSTSSWSEEPAQS) are compositionally biased toward low complexity. Thr700 is subject to Phosphothreonine; by PKA. One can recognise a Tyrosine-protein phosphatase domain in the interval 734 to 994 (LEKEWEALCA…EFALTAVAEE (261 aa)). Substrate-binding positions include Asp902 and 934–940 (CSDGAGR). Catalysis depends on Cys934, which acts as the Phosphocysteine intermediate. N6-acetyllysine is present on Lys959. Gln979 provides a ligand contact to substrate. The Leucine-based sorting signal motif lies at 993–999 (EEVNAIL).

It belongs to the protein-tyrosine phosphatase family. Receptor class 8 subfamily. As to quaternary structure, self-associates. Interacts (via cytoplasmic domain) with PTPRN (via cytoplasmic domain). Interacts (precursor form) with CPE. Interacts with HAP1. Interacts with AP2A1 or AP2A2 and AP1G1; indicative for an association with adaptor protein complex 2 (AP-2) and adaptor protein complex 1 (AP-1). Interacts with AP2M1; indicative for an association with adaptor protein complex 2 (AP-2). Interacts with MYO5A. Subject to proteolytic cleavage at multiple sites.

The protein resides in the cytoplasmic vesicle. Its subcellular location is the secretory vesicle membrane. The protein localises to the secretory vesicle. It is found in the synaptic vesicle membrane. The catalysed reaction is O-phospho-L-tyrosyl-[protein] + H2O = L-tyrosyl-[protein] + phosphate. In terms of biological role, plays a role in vesicle-mediated secretory processes. Required for normal accumulation of secretory vesicles in hippocampus, pituitary and pancreatic islets. Required for the accumulation of normal levels of insulin-containing vesicles and preventing their degradation. Plays a role in insulin secretion in response to glucose stimuli. Required for normal accumulation of the neurotransmitters norepinephrine, dopamine and serotonin in the brain. In females, but not in males, required for normal accumulation and secretion of pituitary hormones, such as luteinizing hormone (LH) and follicle-stimulating hormone (FSH). Required to maintain normal levels of renin expression and renin release. May regulate catalytic active protein-tyrosine phosphatases such as PTPRA through dimerization. Has phosphatidylinositol phosphatase activity; the PIPase activity is involved in its ability to regulate insulin secretion. Can dephosphorylate phosphatidylinositol 4,5-biphosphate, phosphatidylinositol 5-phosphate and phosphatidylinositol 3-phosphate. Regulates PI(4,5)P2 level in the plasma membrane and localization of cofilin at the plasma membrane and thus is indirectly involved in regulation of actin dynamics related to cell migration and metastasis; upon hydrolysis of PI(4,5)P2 cofilin is released from the plasma membrane and acts in the cytoplasm in severing F-actin filaments. The sequence is that of Receptor-type tyrosine-protein phosphatase N2 (Ptprn2) from Rattus norvegicus (Rat).